A 306-amino-acid chain; its full sequence is MHHASLTKNLTHLQRLEAEAIHIFREVAASFSNPVMLYSVGKDSSVMLHLAMKAFYPAPPPFPFLHVDTTWKFREMIEFRDAQAREKGFELLVHINEDGVREGVGPFSHGSNVHTHVMKTVALRQALDKYKFDAAFGGARRDEEKSRAKERIFSFRSAQHGWDPKNQRPEMWKIYNTRVSAGESIRVFPLSNWTELDIWQYILQENIPIVPLYFAAHRPVVERDGMLIMLDDDRMKLRPGETVENRLVRFRTLGCYPLTGAIESSAADLSDIVEEMLIARTSERQGRAIDRDEAGSMEKKKREGYF.

This sequence belongs to the PAPS reductase family. CysD subfamily. As to quaternary structure, heterodimer composed of CysD, the smaller subunit, and CysN.

It carries out the reaction sulfate + ATP + H(+) = adenosine 5'-phosphosulfate + diphosphate. Its pathway is sulfur metabolism; hydrogen sulfide biosynthesis; sulfite from sulfate: step 1/3. With CysN forms the ATP sulfurylase (ATPS) that catalyzes the adenylation of sulfate producing adenosine 5'-phosphosulfate (APS) and diphosphate, the first enzymatic step in sulfur assimilation pathway. APS synthesis involves the formation of a high-energy phosphoric-sulfuric acid anhydride bond driven by GTP hydrolysis by CysN coupled to ATP hydrolysis by CysD. This is Sulfate adenylyltransferase subunit 2 from Brucella anthropi (strain ATCC 49188 / DSM 6882 / CCUG 24695 / JCM 21032 / LMG 3331 / NBRC 15819 / NCTC 12168 / Alc 37) (Ochrobactrum anthropi).